Reading from the N-terminus, the 1396-residue chain is Probable ATP-dependent RNA helicase spindle-E (1396 aa).

Residues 1–34 (MDEAAGPSTSRTSNLEDVDDEGASLAEEDEEHTK) form a disordered region. Over residues 16–30 (EDVDDEGASLAEEDE) the composition is skewed to acidic residues. The 167-residue stretch at 68 to 234 (LDKIRSNAVV…FKIPKKSGYL (167 aa)) folds into the Helicase ATP-binding domain. An ATP-binding site is contributed by 81 to 88 (GATGCGKT). Residues 180 to 183 (DEVH) carry the DEAH box motif. The Helicase C-terminal domain maps to 292–468 (KGQEFGDSLE…TVVLKAKLLE (177 aa)). Residues 885 to 950 (NFAMGQMVAA…RQLDDSLGQL (66 aa)) enclose the Tudor domain.

The protein belongs to the DEAD box helicase family. DEAH subfamily.

It is found in the cytoplasm. It catalyses the reaction ATP + H2O = ADP + phosphate + H(+). In terms of biological role, probable ATP-binding RNA helicase which plays a central role during gametogenesis by repressing transposable elements and preventing their mobilization, which is essential for the germline integrity. Acts via the piRNA metabolic process, which mediates the repression of transposable elements during meiosis by forming complexes composed of piRNAs and Piwi proteins and govern the methylation and subsequent repression of transposons. The sequence is that of Probable ATP-dependent RNA helicase spindle-E (spn-E) from Culex quinquefasciatus (Southern house mosquito).